The sequence spans 471 residues: Arginine biosynthesis bifunctional protein ArgJ, mitochondrial (471 aa).

The substrate site is built by threonine 201, lysine 230, threonine 241, glutamate 328, asparagine 466, and threonine 471. Threonine 241 (nucleophile) is an active-site residue.

Belongs to the ArgJ family. Heterodimer of an alpha and a beta chain. In terms of processing, the alpha and beta chains are autoproteolytically processed from a single precursor protein within the mitochondrion.

The protein resides in the mitochondrion matrix. The catalysed reaction is N(2)-acetyl-L-ornithine + L-glutamate = N-acetyl-L-glutamate + L-ornithine. The enzyme catalyses L-glutamate + acetyl-CoA = N-acetyl-L-glutamate + CoA + H(+). The protein operates within amino-acid biosynthesis; L-arginine biosynthesis; L-ornithine and N-acetyl-L-glutamate from L-glutamate and N(2)-acetyl-L-ornithine (cyclic): step 1/1. It functions in the pathway amino-acid biosynthesis; L-arginine biosynthesis; N(2)-acetyl-L-ornithine from L-glutamate: step 1/4. Functionally, catalyzes two activities which are involved in the cyclic version of arginine biosynthesis: the synthesis of acetylglutamate from glutamate and acetyl-CoA, and of ornithine by transacetylation between acetylornithine and glutamate. This is Arginine biosynthesis bifunctional protein ArgJ, mitochondrial from Ajellomyces capsulatus (strain NAm1 / WU24) (Darling's disease fungus).